Reading from the N-terminus, the 290-residue chain is Translin-associated protein X (290 aa).

A disordered region spans residues 1-34; that stretch reads MNGKEGPGGFRKRKHDNFPHNQRREGKDASSSSP. Residues 16–28 show a composition bias toward basic and acidic residues; the sequence is DNFPHNQRREGKD. An interaction with C1D region spans residues 73-208; that stretch reads LLHRITSAPD…MRMCINSVGN (136 aa). Mg(2+)-binding residues include Glu-129 and Glu-197. Lys-279 is covalently cross-linked (Glycyl lysine isopeptide (Lys-Gly) (interchain with G-Cter in SUMO2)).

It belongs to the translin family. As to quaternary structure, ring-shaped heterooctamer of six TSN and two TSNAX subunits. Interacts with GOLGA3, TSNAXIP1, SUN1 and AKAP9. Interacts with the homodimeric form of C1D following gamma-radiation. Interacts with TSN and C1D in a mutually exclusive manner. In terms of processing, sumoylated with SUMO1. Detected in cerebellum.

The protein resides in the cytoplasm. Its subcellular location is the perinuclear region. The protein localises to the golgi apparatus. It is found in the nucleus. Its function is as follows. Acts in combination with TSN as an endonuclease involved in the activation of the RNA-induced silencing complex (RISC). Possible role in spermatogenesis. The chain is Translin-associated protein X (Tsnax) from Rattus norvegicus (Rat).